The following is a 493-amino-acid chain: C2H2-type transcription factor ffmA (493 aa).

A compositionally biased stretch (low complexity) spans 1 to 18 (MPMPQYTMQPQYPVSQPH). Disordered regions lie at residues 1–50 (MPMP…SRYP), 68–140 (TTVG…YPDG), and 164–202 (EPPRTQVVGSQGRRGILPSVPGRVAPVTNGVNGTAKNTT). Polar residues-rich tracts occupy residues 69–79 (TVGSLPPSTFL) and 192–202 (NGVNGTAKNTT). The C2H2-type 1 zinc-finger motif lies at 212-234 (FPCPHCNKTYLHAKHLKRHLLRH). The C2H2-type 2; degenerate zinc finger occupies 240–265 (YMCVLCKDTFSRSDILKRHFQKCSIR). Polar residues-rich tracts occupy residues 288–307 (QAAANTAKSLQEEVSSTVPP) and 484–493 (ASTTLGGDGK). Disordered stretches follow at residues 288-316 (QAAANTAKSLQEEVSSTVPPSNGIAGATF) and 468-493 (TTTAGPQEGGMNGLYLASTTLGGDGK).

This sequence belongs to the krueppel C2H2-type zinc-finger protein family.

The protein resides in the nucleus. Functionally, transcription factor that acts in coordination with atrR to regulate the expression of the ABC-type multidrug transporter abcG1 and thus plays a role in azole susceptibility. Regulates the expression of genes involved in fermentation. Is able to promote expression from the yeast FLO11 promoter. The chain is C2H2-type transcription factor ffmA from Aspergillus fumigatus (strain CBS 144.89 / FGSC A1163 / CEA10) (Neosartorya fumigata).